The following is a 309-amino-acid chain: Peptide methionine sulfoxide reductase MsrA/MsrB (309 aa).

The tract at residues 1-153 (MIYLAGGCFW…PNGYCHIDIN (153 aa)) is peptide methionine sulfoxide reductase A. The active site involves Cys-8. One can recognise a MsrB domain in the interval 170 to 293 (ATEIKEKLSA…NSLSITFIPK (124 aa)). Cys-282 serves as the catalytic Nucleophile.

In the N-terminal section; belongs to the MsrA Met sulfoxide reductase family. It in the C-terminal section; belongs to the MsrB Met sulfoxide reductase family.

It catalyses the reaction L-methionyl-[protein] + [thioredoxin]-disulfide + H2O = L-methionyl-(S)-S-oxide-[protein] + [thioredoxin]-dithiol. The enzyme catalyses [thioredoxin]-disulfide + L-methionine + H2O = L-methionine (S)-S-oxide + [thioredoxin]-dithiol. It carries out the reaction L-methionyl-[protein] + [thioredoxin]-disulfide + H2O = L-methionyl-(R)-S-oxide-[protein] + [thioredoxin]-dithiol. Its function is as follows. Has an important function as a repair enzyme for proteins that have been inactivated by oxidation. Catalyzes the reversible oxidation-reduction of methionine sulfoxide in proteins to methionine. This Streptococcus pyogenes serotype M18 (strain MGAS8232) protein is Peptide methionine sulfoxide reductase MsrA/MsrB (msrAB).